A 71-amino-acid polypeptide reads, in one-letter code: Large ribosomal subunit protein uL29 (71 aa).

The segment at 1-20 is disordered; it reads MKARELQELRQGSSPQDLQE.

Belongs to the universal ribosomal protein uL29 family.

In Clostridium kluyveri (strain ATCC 8527 / DSM 555 / NBRC 12016 / NCIMB 10680 / K1), this protein is Large ribosomal subunit protein uL29.